A 141-amino-acid chain; its full sequence is MRQRTIVCPLIQNDGCYLLCKMADNRGVFPGQWALSGGGVEPGERIEEALRREVREELGEQLILSDITPWTFRDDIRVKTYADGRQEEIYMIYLIFDCVSANRDICINDEFQDYAWVKPEELALYDLNVATRHTLALKGLL.

In terms of domain architecture, Nudix hydrolase spans 1–141 (MRQRTIVCPL…RHTLALKGLL (141 aa)). The Nudix box motif lies at 38–59 (GGVEPGERIEEALRREVREELG).

It belongs to the Nudix hydrolase family. NudI subfamily. As to quaternary structure, monomer. It depends on Mg(2+) as a cofactor.

The catalysed reaction is a ribonucleoside 5'-triphosphate + H2O = a ribonucleoside 5'-phosphate + diphosphate + H(+). It catalyses the reaction a 2'-deoxyribonucleoside 5'-triphosphate + H2O = a 2'-deoxyribonucleoside 5'-phosphate + diphosphate + H(+). It carries out the reaction dUTP + H2O = dUMP + diphosphate + H(+). The enzyme catalyses dTTP + H2O = dTMP + diphosphate + H(+). The catalysed reaction is dCTP + H2O = dCMP + diphosphate + H(+). Its function is as follows. Catalyzes the hydrolysis of nucleoside triphosphates, with a preference for pyrimidine deoxynucleoside triphosphates (dUTP, dTTP and dCTP). The sequence is that of Nucleoside triphosphatase NudI from Salmonella schwarzengrund (strain CVM19633).